The sequence spans 264 residues: MPLIDASAKIHPTALIEEGAKIGANVEIGAFCVIGKDVRIGAGTKIHSHVVIQGDTEIGEDNQIFQFASIGEINQDLKYQGEPTKTIIGHRNRIRESVTIHRGTVQGGGVTRVGNDNLFMINCHIAHDCSIGNRCIIANNGTLAGHVTLDDFVIVGGMSAIHQFVVVGSHVMLGGGSMVSQDVPPYIMAQGNHAQPFGVNLEGLKRRGFEKATMHAIRNVYKLIYRSGKTLEEAIPEIEQYAKTEAAVSLFLDFFKRSTRGIIR.

It belongs to the transferase hexapeptide repeat family. LpxA subfamily. Homotrimer.

The protein resides in the cytoplasm. The catalysed reaction is a (3R)-hydroxyacyl-[ACP] + UDP-N-acetyl-alpha-D-glucosamine = a UDP-3-O-[(3R)-3-hydroxyacyl]-N-acetyl-alpha-D-glucosamine + holo-[ACP]. It functions in the pathway glycolipid biosynthesis; lipid IV(A) biosynthesis; lipid IV(A) from (3R)-3-hydroxytetradecanoyl-[acyl-carrier-protein] and UDP-N-acetyl-alpha-D-glucosamine: step 1/6. In terms of biological role, involved in the biosynthesis of lipid A, a phosphorylated glycolipid that anchors the lipopolysaccharide to the outer membrane of the cell. This is Acyl-[acyl-carrier-protein]--UDP-N-acetylglucosamine O-acyltransferase from Glaesserella parasuis serovar 5 (strain SH0165) (Haemophilus parasuis).